The chain runs to 431 residues: Evolutionarily conserved signaling intermediate in Toll pathway, mitochondrial (431 aa).

The N-terminal 48 residues, 1–48, are a transit peptide targeting the mitochondrion; sequence MSWVQATLLARGLCRAWGGTCGAALTGTSISQVPRRLPRGLHCSAAAH. Residue lysine 372 forms a Glycyl lysine isopeptide (Lys-Gly) (interchain with G-Cter in ubiquitin) linkage. The interval 400 to 431 is disordered; that stretch reads LQTSSAGLEEPPLPEDHQEEDDNLQRQQQGQS.

Belongs to the ECSIT family. In terms of assembly, interacts with MAP3K1, SMAD4 and TRAF6. Interacts with SMAD1 only after BMP4-treatment. Part of the mitochondrial complex I assembly/MCIA complex that comprises at least the core subunits TMEM126B, NDUFAF1, ECSIT and ACAD9 and complement subunits such as COA1 and TMEM186. Interacts with NDUFAF1. Interacts with ACAD9. Interacts with TRIM59. Interacts with TMEM70 and TMEM242. Interacts (when ubiquitinated) with NF-kappa-B subunits RELA and NFKB1. Interacts with RIGI, IFIT1 and MAVS; these interactions promote RLR-mediated type I IFN induction. Interacts with SQSTM1; this interaction inhibits TLR4 signaling via functional regulation of the TRAF6-ECSIT complex. Interacts with cereblon/CRBN; this interaction inhibits the ubiquitination of ECSIT. Post-translationally, ubiquitinated on Lys-372; leading to translocation in the nucleus together with RELA and NFKB1 and expression of NF-kappa-B-dependent genes.

It is found in the cytoplasm. It localises to the nucleus. The protein resides in the mitochondrion. In terms of biological role, adapter protein that plays a role in different signaling pathways including TLRs and IL-1 pathways or innate antiviral induction signaling. Plays a role in the activation of NF-kappa-B by forming a signal complex with TRAF6 and TAK1/MAP3K7 to activate TAK1/MAP3K7 leading to activation of IKKs. Once ubiquitinated, interacts with the dissociated RELA and NFKB1 proteins and translocates to the nucleus where it induces NF-kappa-B-dependent gene expression. Plays a role in innate antiviral immune response by bridging the pattern recognition receptors RIGI and MDA5/IFIT1 to the MAVS complex at the mitochondrion. Promotes proteolytic activation of MAP3K1. Involved in the BMP signaling pathway. Required for normal embryonic development. As part of the MCIA complex, involved in the assembly of the mitochondrial complex I. The protein is Evolutionarily conserved signaling intermediate in Toll pathway, mitochondrial of Homo sapiens (Human).